The chain runs to 276 residues: Dermonecrotic toxin LdSicTox-alphaIB2 (276 aa).

Histidine 5 is a catalytic residue. Residues glutamate 25 and aspartate 27 each coordinate Mg(2+). Histidine 41 functions as the Nucleophile in the catalytic mechanism. Cystine bridges form between cysteine 45–cysteine 51 and cysteine 47–cysteine 190. Aspartate 85 contributes to the Mg(2+) binding site. Asparagine 253 carries an N-linked (GlcNAc...) asparagine glycan.

It belongs to the arthropod phospholipase D family. Class II subfamily. Mg(2+) serves as cofactor. Expressed by the venom gland.

It is found in the secreted. It catalyses the reaction an N-(acyl)-sphingosylphosphocholine = an N-(acyl)-sphingosyl-1,3-cyclic phosphate + choline. It carries out the reaction an N-(acyl)-sphingosylphosphoethanolamine = an N-(acyl)-sphingosyl-1,3-cyclic phosphate + ethanolamine. The catalysed reaction is a 1-acyl-sn-glycero-3-phosphocholine = a 1-acyl-sn-glycero-2,3-cyclic phosphate + choline. The enzyme catalyses a 1-acyl-sn-glycero-3-phosphoethanolamine = a 1-acyl-sn-glycero-2,3-cyclic phosphate + ethanolamine. Functionally, dermonecrotic toxins cleave the phosphodiester linkage between the phosphate and headgroup of certain phospholipids (sphingolipid and lysolipid substrates), forming an alcohol (often choline) and a cyclic phosphate. This toxin acts on sphingomyelin (SM). It may also act on ceramide phosphoethanolamine (CPE), lysophosphatidylcholine (LPC) and lysophosphatidylethanolamine (LPE), but not on lysophosphatidylserine (LPS), and lysophosphatidylglycerol (LPG). It acts by transphosphatidylation, releasing exclusively cyclic phosphate products as second products. Induces dermonecrosis, hemolysis, increased vascular permeability, edema, inflammatory response, and platelet aggregation. In Loxosceles deserta (Desert recluse spider), this protein is Dermonecrotic toxin LdSicTox-alphaIB2.